Consider the following 657-residue polypeptide: Translation factor GUF1, mitochondrial (657 aa).

The transit peptide at 1-39 (MRGCLQSVKWLTSALRPSQSLASSTRYPRRLLSTSAPRN) directs the protein to the mitochondrion. In terms of domain architecture, tr-type G spans 59-239 (ERFRNFCIVA…TVIEQIPAPV (181 aa)). GTP contacts are provided by residues 68–75 (AHVDHGKS), 132–136 (DTPGH), and 186–189 (NKVD).

It belongs to the TRAFAC class translation factor GTPase superfamily. Classic translation factor GTPase family. LepA subfamily.

It is found in the mitochondrion inner membrane. The catalysed reaction is GTP + H2O = GDP + phosphate + H(+). Promotes mitochondrial protein synthesis. May act as a fidelity factor of the translation reaction, by catalyzing a one-codon backward translocation of tRNAs on improperly translocated ribosomes. Binds to mitochondrial ribosomes in a GTP-dependent manner. The chain is Translation factor GUF1, mitochondrial from Ajellomyces capsulatus (strain G186AR / H82 / ATCC MYA-2454 / RMSCC 2432) (Darling's disease fungus).